The primary structure comprises 614 residues: MRPPWYPLHTPSLASPLLFLLLSLLGGGARAEGREDPQLLVRVRGGQLRGIRLKAPGGPVSAFLGIPFAEPPVGSRRFMPPEPKRPWSGILDATTFQNVCYQYVDTLYPGFEGTEMWNPNRELSEDCLYLNVWTPYPRPTSPTPVLIWIYGGGFYSGASSLDVYDGRFLAQVEGTVLVSMNYRVGTFGFLALPGSREAPGNVGLLDQRLALQWVQENIAAFGGDPMSVTLFGESAGAASVGMHILSLPSRSLFHRAVLQSGTPNGPWATVSAGEARRRATLLARLVGCPPGGAGGNDTELISCLRTRPAQDLVDHEWHVLPQESIFRFSFVPVVDGDFLSDTPDALINTGDFQDLQVLVGVVKDEGSYFLVYGVPGFSKDNESLISRAQFLAGVRIGVPQASDLAAEAVVLHYTDWLHPEDPAHLRDAMSAVVGDHNVVCPVAQLAGRLAAQGARVYAYIFEHRASTLTWPLWMGVPHGYEIEFIFGLPLDPSLNYTVEERIFAQRLMQYWTNFARTGDPNDPRDSKSPRWPPYTTAAQQYVSLNLKPLEVRRGLRAQTCAFWNRFLPKLLSATDTLDEAERQWKAEFHRWSSYMVHWKNQFDHYSKQERCSDL.

The N-terminal stretch at 1–31 (MRPPWYPLHTPSLASPLLFLLLSLLGGGARA) is a signal peptide. C100 and C127 are joined by a disulfide. S234 serves as the catalytic Acyl-ester intermediate. C288 and C303 are oxidised to a cystine. N-linked (GlcNAc...) asparagine glycosylation occurs at N296. E365 (charge relay system) is an active-site residue. N381 carries N-linked (GlcNAc...) asparagine glycosylation. C440 and C560 are joined by a disulfide. The active-site Charge relay system is the H478. N495 carries N-linked (GlcNAc...) asparagine glycosylation.

It belongs to the type-B carboxylesterase/lipase family. Homotetramer; composed of disulfide-linked homodimers. Catalytic forms H (GPI-anchor dimer) and T (asymmetric collagen-tailed), which differ in their C-terminus, account for all types of known ACHE forms. Interacts with PRIMA1. The interaction with PRIMA1 is required to anchor it to the basal lamina of cells and organize into tetramers. As to expression, has been found in central nervous system and muscle. Found in embryonic liver and spleen but not in adult liver.

The protein localises to the synapse. Its subcellular location is the secreted. It is found in the cell membrane. It carries out the reaction acetylcholine + H2O = choline + acetate + H(+). Terminates signal transduction at the neuromuscular junction by rapid hydrolysis of the acetylcholine released into the synaptic cleft. In Rattus norvegicus (Rat), this protein is Acetylcholinesterase (Ache).